The sequence spans 2187 residues: Non-reducing polyketide synthase phnA (2187 aa).

Residues 17–255 are N-terminal acylcarrier protein transacylase domain (SAT); that stretch reads LLFGDLSLAH…KYLDIDSPYH (239 aa). The region spanning 383 to 819 is the Ketosynthase family 3 (KS3) domain; the sequence is HSKIAIVGYS…GGNTAMLIED (437 aa). Residues C555, H690, and H735 each act as for beta-ketoacyl synthase activity in the active site. The interval 926–1226 is malonyl-CoA:ACP transacylase (MAT) domain; it reads RVAFAFTGQG…GMVKGTIDSR (301 aa). Residue S1021 is the For acyl/malonyl transferase activity of the active site. The interval 1321–1637 is product template (PT) domain; that stretch reads PCAQQIVEEF…PRRALDHLLP (317 aa). The tract at residues 1324–1458 is N-terminal hotdog fold; the sequence is QQIVEEFHDS…LDVVLYPGQQ (135 aa). The PKS/mFAS DH domain occupies 1324 to 1633; sequence QQIVEEFHDS…FQGVPRRALD (310 aa). The Proton acceptor; for dehydratase activity role is filled by H1356. Residues 1486–1633 are C-terminal hotdog fold; sequence TETHLIKRGM…FQGVPRRALD (148 aa). The active-site Proton donor; for dehydratase activity is D1546. The span at 1652-1669 shows a compositional bias: low complexity; it reads KAPVAAVAPPRTPTKAAP. The tract at residues 1652 to 1681 is disordered; sequence KAPVAAVAPPRTPTKAAPQSRQAAPKQKRS. 2 Carrier domains span residues 1684-1758 and 1796-1874; these read SDVF…SNSD and SSES…YNVM. Position 1718 is an O-(pantetheine 4'-phosphoryl)serine (S1718). Positions 1754-1796 are disordered; that stretch reads LSNSDEDDTPSGDSSTYEDSESQITSPASSVGPETPGGGEFGS. Residues 1757-1774 are compositionally biased toward acidic residues; that stretch reads SDEDDTPSGDSSTYEDSE. S1834 bears the O-(pantetheine 4'-phosphoryl)serine mark. The tract at residues 1906–2183 is thioesterase (TE) domain; it reads SSLPQATSIL…PEMGEAVAEF (278 aa). S2009 functions as the For thioesterase activity in the catalytic mechanism.

It carries out the reaction 6 malonyl-CoA + acetyl-CoA + 5 H(+) = 3,6,7,9-tetrahydroxy-3-methyl-2,3-dihydro-1H-naphtho[2,1-b]pyran-1-one + 6 CO2 + 7 CoA + H2O. It participates in secondary metabolite biosynthesis. Functionally, non-reducing polyketide synthase; part of the gene cluster that mediates the biosynthesis of phenalenones such as herqueinone, compounds that have been reported to treat tumors, bacterial infections and/or mycoses, and rheumatic diseases. The non-reducing polyketide synthase phnA synthesizes the heptaketide backbone and cyclizes it into the angular, hemiketal-containing naphtho-gamma-pyrone prephenalenone. The product template (PT) domain of phnA catalyzes only the C4-C9 aldol condensation, which is unprecedented among known PT domains. The transformation of prephenalenone to phenalenones requires an FAD-dependent monooxygenase phnB, which catalyzes the C2 aromatic hydroxylation of prephenalenone and ring opening of the gamma-pyrone ring simultaneously. Subsequent intramolecular deprotonation of C3 phenolic oxygen accelerates phenalenone ring closure to yield the tricyclic phenalenone core with a C2 hydroxylation. The prenyltransferase phnF further catalyzes reverse C-prenylation of phenalenone by direct electrophilic substitution at C6, or possibly via first a forward O-prenylation of a neighboring phenol in phenalenone, followed by a Claisen rearrangement. The hydroalkoxylation enzyme phnH catalyzes the 5-exo-trig cyclization via acid catalysis after the spontaneous deprotonation of 7-OH, which leads to the formation of the dihydrobenzofuran atrovenetin. Atrovenetin is further converted to deoxyherqueinone by the O-methyltransferase phnC which can methylate C2-OH to stabilize the northern portion of the phenalenone core. Finally, the oxidoreductase phnG converts deoxyherqueinone to herqueinone via C6 hydroxylation. The sequence is that of Non-reducing polyketide synthase phnA from Penicillium herquei.